The following is a 188-amino-acid chain: MNGDDTFAKRPRDDAKASEKRSKAFDDIATYFSKKEWKKMKYSEKISYVYMKRNYKAMTKLGFKVTLPPFMCNKQATDFQGNDFDNDHNRRIQVEHPQMTFGRLHRIIPKIMPKKPAEDENDSKGVSEASGPQNDGKQLHPPGKANISEKINKRSGPKRGKHAWTHRLRERKQLVIYEEISDPEEDDE.

2 disordered regions span residues 1–22 (MNGD…EKRS) and 111–188 (IMPK…EDDE). Positions 20–83 (KRSKAFDDIA…KQATDFQGND (64 aa)) constitute a KRAB-related domain. Over residues 115–125 (KPAEDENDSKG) the composition is skewed to basic and acidic residues. Residue serine 123 is modified to Phosphoserine. The segment covering 153-170 (KRSGPKRGKHAWTHRLRE) has biased composition (basic residues). Residues 179–188 (EISDPEEDDE) are compositionally biased toward acidic residues.

It belongs to the SSX family. Expressed at high level in the testis. Expressed at low level in thyroid. Not detected in tonsil, colon, lung, spleen, prostate, kidney, striated and smooth muscles. Detected in rhabdomyosarcoma and fibrosarcoma cell lines. Not detected in mesenchymal and epithelial cell lines. Expressed in testis.

The protein localises to the cytoplasm. It localises to the cytoskeleton. Its subcellular location is the flagellum axoneme. Its function is as follows. Could act as a modulator of transcription. Plays a role in spermatogenesis. The chain is Protein SSX1 (SSX1) from Homo sapiens (Human).